A 383-amino-acid polypeptide reads, in one-letter code: Dual-specificity RNA methyltransferase RlmN (383 aa).

E95 serves as the catalytic Proton acceptor. Positions 101–349 constitute a Radical SAM core domain; sequence EETRGTLCVS…TTVRKTRGDD (249 aa). C108 and C354 are oxidised to a cystine. The [4Fe-4S] cluster site is built by C115, C119, and C122. Residues 180 to 181, S212, 234 to 236, and N311 contribute to the S-adenosyl-L-methionine site; these read GE and SLH. The active-site S-methylcysteine intermediate is the C354.

Belongs to the radical SAM superfamily. RlmN family. The cofactor is [4Fe-4S] cluster.

It is found in the cytoplasm. It catalyses the reaction adenosine(2503) in 23S rRNA + 2 reduced [2Fe-2S]-[ferredoxin] + 2 S-adenosyl-L-methionine = 2-methyladenosine(2503) in 23S rRNA + 5'-deoxyadenosine + L-methionine + 2 oxidized [2Fe-2S]-[ferredoxin] + S-adenosyl-L-homocysteine. The catalysed reaction is adenosine(37) in tRNA + 2 reduced [2Fe-2S]-[ferredoxin] + 2 S-adenosyl-L-methionine = 2-methyladenosine(37) in tRNA + 5'-deoxyadenosine + L-methionine + 2 oxidized [2Fe-2S]-[ferredoxin] + S-adenosyl-L-homocysteine. Its function is as follows. Specifically methylates position 2 of adenine 2503 in 23S rRNA and position 2 of adenine 37 in tRNAs. m2A2503 modification seems to play a crucial role in the proofreading step occurring at the peptidyl transferase center and thus would serve to optimize ribosomal fidelity. This Paraburkholderia phytofirmans (strain DSM 17436 / LMG 22146 / PsJN) (Burkholderia phytofirmans) protein is Dual-specificity RNA methyltransferase RlmN.